The primary structure comprises 203 residues: Nucleoside triphosphate pyrophosphatase (203 aa).

D78 functions as the Proton acceptor in the catalytic mechanism.

It belongs to the Maf family. A divalent metal cation is required as a cofactor.

It localises to the cytoplasm. It carries out the reaction a ribonucleoside 5'-triphosphate + H2O = a ribonucleoside 5'-phosphate + diphosphate + H(+). The enzyme catalyses a 2'-deoxyribonucleoside 5'-triphosphate + H2O = a 2'-deoxyribonucleoside 5'-phosphate + diphosphate + H(+). Its function is as follows. Nucleoside triphosphate pyrophosphatase. May have a dual role in cell division arrest and in preventing the incorporation of modified nucleotides into cellular nucleic acids. This chain is Nucleoside triphosphate pyrophosphatase, found in Prochlorococcus marinus (strain AS9601).